Reading from the N-terminus, the 488-residue chain is MTNSGTASGVRVRIAPSPTGEPHVGTAYIALFNYLFAKKHGGEFILRIEDTDATRSTPEFETKVLDALKWCGLEWKEGPDIGGPYGPYRQSDRKPMYQPYAQELLDKGHAFRCFCTPARLEQMRETQRAAGKPPKYDGLCLNLTAEEVTARMAAGETTVIRMKIPAEGSCDFTDGVYGDVSIPWDSVDMQVLIKADGMPTYHMANVIDDHLMKITHVARGEEWLASVPKHILLYRYFGWEQPVFMHLSLMRNADKSKLSKRKNPTSISYYSALGYIPEALMNFLGLFFMQIAEGEELLTMEELSEKFDPDNLSKAGAIFDIQKLDWLNGRWIREKLSEEEFRARVLTWAMENDRLMAGLRLSQTRISKLGELPDLASFLLKSDLGLQPSDFAKIKSPPEEILEILNTVQPDLEKILEWNVETIEAELRAVADRLGKKLKVVVAPLFVAVSGSSRSLPLFDSMALLGRSVVRQRLKLAAQAVAALVGSK.

The 'HIGH' region signature appears at 16–26; sequence PSPTGEPHVGT. Positions 257 to 261 match the 'KMSKS' region motif; the sequence is KLSKR. Residue Lys-260 coordinates ATP.

It belongs to the class-I aminoacyl-tRNA synthetase family. Glutamate--tRNA ligase type 1 subfamily. As to quaternary structure, monomer.

The protein localises to the cytoplasm. It carries out the reaction tRNA(Glu) + L-glutamate + ATP = L-glutamyl-tRNA(Glu) + AMP + diphosphate. Functionally, catalyzes the attachment of glutamate to tRNA(Glu) in a two-step reaction: glutamate is first activated by ATP to form Glu-AMP and then transferred to the acceptor end of tRNA(Glu). In Rhizobium etli (strain ATCC 51251 / DSM 11541 / JCM 21823 / NBRC 15573 / CFN 42), this protein is Glutamate--tRNA ligase.